We begin with the raw amino-acid sequence, 128 residues long: Large ribosomal subunit protein eL22 (128 aa).

It belongs to the eukaryotic ribosomal protein eL22 family. In terms of assembly, component of the large ribosomal subunit.

It is found in the cytoplasm. Functionally, component of the large ribosomal subunit. The ribosome is a large ribonucleoprotein complex responsible for the synthesis of proteins in the cell. The polypeptide is Large ribosomal subunit protein eL22 (rpl22) (Xenopus tropicalis (Western clawed frog)).